A 280-amino-acid chain; its full sequence is Energy-coupling factor transporter ATP-binding protein EcfA1 (280 aa).

The ABC transporter domain maps to 6-241 (IELKNVTFRY…GDELLDLGLD (236 aa)). 41–48 (GHNGSGKS) serves as a coordination point for ATP.

It belongs to the ABC transporter superfamily. Energy-coupling factor EcfA family. In terms of assembly, forms a stable energy-coupling factor (ECF) transporter complex composed of 2 membrane-embedded substrate-binding proteins (S component), 2 ATP-binding proteins (A component) and 2 transmembrane proteins (T component).

Its subcellular location is the cell membrane. Its function is as follows. ATP-binding (A) component of a common energy-coupling factor (ECF) ABC-transporter complex. Unlike classic ABC transporters this ECF transporter provides the energy necessary to transport a number of different substrates. In Streptococcus mutans serotype c (strain ATCC 700610 / UA159), this protein is Energy-coupling factor transporter ATP-binding protein EcfA1.